Reading from the N-terminus, the 199-residue chain is Peroxiredoxin-1 (199 aa).

S2 is subject to N-acetylserine. In terms of domain architecture, Thioredoxin spans 6–165 (AKIGYPAPNF…IIRLVQAFQF (160 aa)). K7 bears the N6-acetyllysine; alternate mark. A Glycyl lysine isopeptide (Lys-Gly) (interchain with G-Cter in SUMO2); alternate cross-link involves residue K7. An N6-acetyllysine mark is found at K16 and K27. The residue at position 32 (S32) is a Phosphoserine. K35 bears the N6-acetyllysine; alternate mark. Residue K35 is modified to N6-succinyllysine; alternate. The Cysteine sulfenic acid (-SOH) intermediate role is filled by C52. T90 is modified (phosphothreonine). K120 is covalently cross-linked (Glycyl lysine isopeptide (Lys-Gly) (interchain with G-Cter in SUMO2)). K136 is subject to N6-acetyllysine. K185 is covalently cross-linked (Glycyl lysine isopeptide (Lys-Gly) (interchain with G-Cter in SUMO1)). K197 is modified (N6-acetyllysine).

It belongs to the peroxiredoxin family. AhpC/Prx1 subfamily. Homodimer; disulfide-linked, upon oxidation. 5 homodimers assemble to form a ring-like decamer. Interacts with GDPD5; forms a mixed-disulfide with GDPD5. Interacts with SESN1 and SESN2. Interacts with FAM107A. In terms of processing, phosphorylated on Thr-90 during the M-phase, which leads to a decrease in enzymatic activity. Post-translationally, acetylation increases reducing activity and resistance to superoxidation. Deacetylated by HDAC6 which decreases reducing activity. In terms of tissue distribution, found in various tissues; high concentration in liver.

The protein localises to the cytoplasm. The catalysed reaction is a hydroperoxide + [thioredoxin]-dithiol = an alcohol + [thioredoxin]-disulfide + H2O. Functionally, thiol-specific peroxidase that catalyzes the reduction of hydrogen peroxide and organic hydroperoxides to water and alcohols, respectively. Plays a role in cell protection against oxidative stress by detoxifying peroxides and as sensor of hydrogen peroxide-mediated signaling events. Might participate in the signaling cascades of growth factors and tumor necrosis factor-alpha by regulating the intracellular concentrations of H(2)O(2). Reduces an intramolecular disulfide bond in GDPD5 that gates the ability to GDPD5 to drive postmitotic motor neuron differentiation. This is Peroxiredoxin-1 (Prdx1) from Mus musculus (Mouse).